Here is a 398-residue protein sequence, read N- to C-terminus: 8-amino-7-oxononanoate synthase (398 aa).

Substrate-binding residues include arginine 22 and arginine 29. A pyridoxal 5'-phosphate-binding site is contributed by 109–110 (GW). A substrate-binding site is contributed by histidine 141. Pyridoxal 5'-phosphate is bound by residues serine 189, 214 to 217 (DEAH), and 242 to 245 (TFSK). At lysine 245 the chain carries N6-(pyridoxal phosphate)lysine. A substrate-binding site is contributed by threonine 359.

Belongs to the class-II pyridoxal-phosphate-dependent aminotransferase family. BioF subfamily. Homodimer. Requires pyridoxal 5'-phosphate as cofactor.

The enzyme catalyses 6-carboxyhexanoyl-[ACP] + L-alanine + H(+) = (8S)-8-amino-7-oxononanoate + holo-[ACP] + CO2. It participates in cofactor biosynthesis; biotin biosynthesis. Its function is as follows. Catalyzes the decarboxylative condensation of pimeloyl-[acyl-carrier protein] and L-alanine to produce 8-amino-7-oxononanoate (AON), [acyl-carrier protein], and carbon dioxide. This Gluconacetobacter diazotrophicus (strain ATCC 49037 / DSM 5601 / CCUG 37298 / CIP 103539 / LMG 7603 / PAl5) protein is 8-amino-7-oxononanoate synthase.